Consider the following 266-residue polypeptide: Glutamate racemase (266 aa).

Substrate is bound by residues 9–10 and 41–42; these read DS and YG. Cys72 serves as the catalytic Proton donor/acceptor. Substrate is bound at residue 73 to 74; that stretch reads NT. Catalysis depends on Cys184, which acts as the Proton donor/acceptor. 185 to 186 contributes to the substrate binding site; sequence TH.

It belongs to the aspartate/glutamate racemases family. As to quaternary structure, homodimer.

It carries out the reaction L-glutamate = D-glutamate. Its pathway is cell wall biogenesis; peptidoglycan biosynthesis. In terms of biological role, provides the (R)-glutamate required for cell wall biosynthesis. This is Glutamate racemase from Staphylococcus aureus (strain MRSA252).